The primary structure comprises 357 residues: Sulfate/thiosulfate import ATP-binding protein CysA (357 aa).

The region spanning 3-237 (IVIQNVSKSF…PKSPFVYDFL (235 aa)) is the ABC transporter domain. ATP is bound at residue 35–42 (GPSGSGKT).

This sequence belongs to the ABC transporter superfamily. Sulfate/tungstate importer (TC 3.A.1.6) family. The complex is composed of two ATP-binding proteins (CysA), two transmembrane proteins (CysT and CysW) and a solute-binding protein (CysP).

The protein localises to the cell membrane. The catalysed reaction is sulfate(out) + ATP + H2O = sulfate(in) + ADP + phosphate + H(+). It carries out the reaction thiosulfate(out) + ATP + H2O = thiosulfate(in) + ADP + phosphate + H(+). Its function is as follows. Part of the ABC transporter complex CysAWTP involved in sulfate/thiosulfate import. Responsible for energy coupling to the transport system. This Halalkalibacterium halodurans (strain ATCC BAA-125 / DSM 18197 / FERM 7344 / JCM 9153 / C-125) (Bacillus halodurans) protein is Sulfate/thiosulfate import ATP-binding protein CysA.